An 891-amino-acid chain; its full sequence is Dynein axonemal intermediate chain 3 (891 aa).

Residues 1 to 16 (MAPKQKKKSSRRKKSP) are compositionally biased toward basic residues. A disordered region spans residues 1-27 (MAPKQKKKSSRRKKSPKPILAASEDME). WD repeat units follow at residues 395-435 (ESPD…DRIE), 477-533 (GHKR…PLTP), 670-709 (IHDG…GPLL), and 713-753 (CAPK…HEPA). The stretch at 817–861 (HLEYVEQRKKIREQEKKEMEQEMAKKKVKIYQKSKEQMEAELKMD) forms a coiled coil.

Interacts with ACTR2; this interaction reduces binding of the Arp2/3 complex to the VCA domain of nucleation promoting factors. Part of the multisubunit axonemal dynein complex formed at least of two heavy chains and a number of intermediate and light chains. Found in a associated with the catalytic heavy chain DNAH2, the intermediate chain DNAI4, and the light chain DYNLT1.

The protein localises to the cytoplasm. Functionally, acts as a negative regulator of cell migration, invasion, and metastasis downstream of p53/TP53, through inhibition of Arp2/3 complex-mediated actin polymerization. Via its association with the multisubunit axonemal dynein complex, is potentially involved in the regulation of cilia function. May play a role in osteogenesis of dental tissue-derived mesenchymal stem cells. This chain is Dynein axonemal intermediate chain 3 (DNAI3), found in Macaca fascicularis (Crab-eating macaque).